The primary structure comprises 130 residues: MMRQSRQAVLPEISGNKTSSLRKSICSDLLTLFNSPHSALPSLLVSGMPEWQVHNQSDKHLQSWYCRQLRSALLFHEPRIAALQVNLKEAYSHTLAISLEIMLYHDDEPLTFDLVWDNGGWRSATLENVS.

The protein belongs to the GpW/Gp25 family. IraD subfamily. Interacts with RssB.

It localises to the cytoplasm. Its function is as follows. Inhibits RpoS proteolysis by regulating RssB activity, thereby increasing the stability of the sigma stress factor RpoS during oxidative stress. Its effect on RpoS stability is due to its interaction with RssB, which probably blocks the interaction of RssB with RpoS, and the consequent delivery of the RssB-RpoS complex to the ClpXP protein degradation pathway. This Escherichia coli O45:K1 (strain S88 / ExPEC) protein is Anti-adapter protein IraD.